Reading from the N-terminus, the 451-residue chain is Trigger factor (451 aa).

Residues 173-258 (GDRVTLDFVG…LKKIEWAHLP (86 aa)) enclose the PPIase FKBP-type domain.

Belongs to the FKBP-type PPIase family. Tig subfamily.

The protein localises to the cytoplasm. The catalysed reaction is [protein]-peptidylproline (omega=180) = [protein]-peptidylproline (omega=0). Involved in protein export. Acts as a chaperone by maintaining the newly synthesized protein in an open conformation. Functions as a peptidyl-prolyl cis-trans isomerase. The chain is Trigger factor from Cupriavidus necator (strain ATCC 17699 / DSM 428 / KCTC 22496 / NCIMB 10442 / H16 / Stanier 337) (Ralstonia eutropha).